The following is an 834-amino-acid chain: DIS3-like exonuclease 2 (834 aa).

Polar residues predominate over residues 1-23 (MHNSEFLSPVQSGTQRGTNRSIL). The segment at 1–35 (MHNSEFLSPVQSGTQRGTNRSILNNKKSGKGKKKS) is disordered. Residues D354 and D363 each contribute to the Mg(2+) site.

This sequence belongs to the RNR ribonuclease family. DIS3L2 subfamily. It depends on Mg(2+) as a cofactor. Mn(2+) serves as cofactor.

The protein localises to the cytoplasm. It is found in the P-body. In terms of biological role, 3'-5'-exoribonuclease that specifically recognizes RNAs polyuridylated at their 3' end and mediates their degradation. Component of an exosome-independent RNA degradation pathway that mediates degradation of both mRNAs and miRNAs that have been polyuridylated by a terminal uridylyltransferase. Essential for correct mitosis, and negatively regulates cell proliferation. In Xenopus tropicalis (Western clawed frog), this protein is DIS3-like exonuclease 2.